We begin with the raw amino-acid sequence, 467 residues long: Cell division protein FtsP (467 aa).

Positions 1–28 (MRSLTRRDFLKSGILASSLSCIPQSVMA) form a signal peptide, tat-type signal.

Belongs to the FtsP family. In terms of processing, predicted to be exported by the Tat system. The position of the signal peptide cleavage has not been experimentally proven.

Its subcellular location is the periplasm. Its function is as follows. Cell division protein that is required for growth during stress conditions. May be involved in protecting or stabilizing the divisomal assembly under conditions of stress. In Histophilus somni (strain 2336) (Haemophilus somnus), this protein is Cell division protein FtsP.